Here is a 419-residue protein sequence, read N- to C-terminus: Multifunctional CCA protein (419 aa).

ATP contacts are provided by Gly8 and Arg11. CTP is bound by residues Gly8 and Arg11. Mg(2+) contacts are provided by Asp21 and Asp23. Residues Arg91, Arg137, and Arg140 each contribute to the ATP site. CTP-binding residues include Arg91, Arg137, and Arg140. Residues 228-334 (SFLHTMLVLQ…IKLFNKLDVW (107 aa)) enclose the HD domain.

This sequence belongs to the tRNA nucleotidyltransferase/poly(A) polymerase family. Bacterial CCA-adding enzyme type 1 subfamily. As to quaternary structure, monomer. Can also form homodimers and oligomers. Mg(2+) is required as a cofactor. The cofactor is Ni(2+).

It carries out the reaction a tRNA precursor + 2 CTP + ATP = a tRNA with a 3' CCA end + 3 diphosphate. The enzyme catalyses a tRNA with a 3' CCA end + 2 CTP + ATP = a tRNA with a 3' CCACCA end + 3 diphosphate. Catalyzes the addition and repair of the essential 3'-terminal CCA sequence in tRNAs without using a nucleic acid template. Adds these three nucleotides in the order of C, C, and A to the tRNA nucleotide-73, using CTP and ATP as substrates and producing inorganic pyrophosphate. tRNA 3'-terminal CCA addition is required both for tRNA processing and repair. Also involved in tRNA surveillance by mediating tandem CCA addition to generate a CCACCA at the 3' terminus of unstable tRNAs. While stable tRNAs receive only 3'-terminal CCA, unstable tRNAs are marked with CCACCA and rapidly degraded. The protein is Multifunctional CCA protein of Mannheimia succiniciproducens (strain KCTC 0769BP / MBEL55E).